The primary structure comprises 297 residues: Tyrosine recombinase XerD (297 aa).

Residues 1–86 enclose the Core-binding (CB) domain; the sequence is MKDSALIELF…AMRKLFQYLY (86 aa). The 185-residue stretch at 107-291 folds into the Tyr recombinase domain; it reads RLPKYLTEQQ…AKERLKHLHE (185 aa). Active-site residues include Arg-147, Lys-171, His-243, Arg-246, and His-269. Tyr-278 (O-(3'-phospho-DNA)-tyrosine intermediate) is an active-site residue.

Belongs to the 'phage' integrase family. XerD subfamily. As to quaternary structure, forms a cyclic heterotetrameric complex composed of two molecules of XerC and two molecules of XerD.

Its subcellular location is the cytoplasm. Its function is as follows. Site-specific tyrosine recombinase, which acts by catalyzing the cutting and rejoining of the recombining DNA molecules. The XerC-XerD complex is essential to convert dimers of the bacterial chromosome into monomers to permit their segregation at cell division. It also contributes to the segregational stability of plasmids. The protein is Tyrosine recombinase XerD of Pasteurella multocida (strain Pm70).